We begin with the raw amino-acid sequence, 142 residues long: Hydrogenase maturation factor HypA (142 aa).

Histidine 2 is a Ni(2+) binding site. Zn(2+) contacts are provided by cysteine 73, cysteine 76, cysteine 109, and cysteine 112.

The protein belongs to the HypA/HybF family.

Involved in the maturation of [NiFe] hydrogenases. Required for nickel insertion into the metal center of the hydrogenase. The chain is Hydrogenase maturation factor HypA from Methanopyrus kandleri (strain AV19 / DSM 6324 / JCM 9639 / NBRC 100938).